The chain runs to 90 residues: Cell division topological specificity factor (90 aa).

It belongs to the MinE family.

Functionally, prevents the cell division inhibition by proteins MinC and MinD at internal division sites while permitting inhibition at polar sites. This ensures cell division at the proper site by restricting the formation of a division septum at the midpoint of the long axis of the cell. In Francisella philomiragia subsp. philomiragia (strain ATCC 25017 / CCUG 19701 / FSC 153 / O#319-036), this protein is Cell division topological specificity factor.